A 506-amino-acid chain; its full sequence is ATP synthase subunit alpha (506 aa).

169–176 is an ATP binding site; it reads GDRQTGKT.

This sequence belongs to the ATPase alpha/beta chains family. As to quaternary structure, F-type ATPases have 2 components, CF(1) - the catalytic core - and CF(0) - the membrane proton channel. CF(1) has five subunits: alpha(3), beta(3), gamma(1), delta(1), epsilon(1). CF(0) has three main subunits: a(1), b(2) and c(9-12). The alpha and beta chains form an alternating ring which encloses part of the gamma chain. CF(1) is attached to CF(0) by a central stalk formed by the gamma and epsilon chains, while a peripheral stalk is formed by the delta and b chains.

The protein resides in the cell membrane. The enzyme catalyses ATP + H2O + 4 H(+)(in) = ADP + phosphate + 5 H(+)(out). Functionally, produces ATP from ADP in the presence of a proton gradient across the membrane. The alpha chain is a regulatory subunit. The sequence is that of ATP synthase subunit alpha from Lawsonia intracellularis (strain PHE/MN1-00).